The sequence spans 128 residues: Flagellar basal body rod protein FlgB (128 aa).

The protein belongs to the flagella basal body rod proteins family. The basal body constitutes a major portion of the flagellar organelle and consists of a number of rings mounted on a central rod. In Gram-negative bacteria, at least four rings, L, P, S and M are present, whereas Gram-positive bacteria lack the L and P rings. The rod consists of about 26 subunits of FlgG in the distal portion, and FlgB, FlgC and FlgF build up the proximal portion of the rod with about 6 subunits each. Rod assembly occurs by export via the flagellum-specific pathway of its constituent proteins and by their incorporation into the rod structure in the probable order of FlgB, FlgC, FlgF and FlgG. Another protein, FliE, also assembles onto the stable rod structure.

Its subcellular location is the bacterial flagellum basal body. In terms of biological role, structural component of flagellum, the bacterial motility apparatus. Part of the rod structure of flagellar basal body. The sequence is that of Flagellar basal body rod protein FlgB from Cereibacter sphaeroides (strain ATCC 17023 / DSM 158 / JCM 6121 / CCUG 31486 / LMG 2827 / NBRC 12203 / NCIMB 8253 / ATH 2.4.1.) (Rhodobacter sphaeroides).